The chain runs to 184 residues: Probable chemoreceptor glutamine deamidase CheD (184 aa).

Belongs to the CheD family.

It carries out the reaction L-glutaminyl-[protein] + H2O = L-glutamyl-[protein] + NH4(+). In terms of biological role, probably deamidates glutamine residues to glutamate on methyl-accepting chemotaxis receptors (MCPs), playing an important role in chemotaxis. The polypeptide is Probable chemoreceptor glutamine deamidase CheD (Rhizobium rhizogenes (strain K84 / ATCC BAA-868) (Agrobacterium radiobacter)).